We begin with the raw amino-acid sequence, 128 residues long: UPF0325 protein YaeH (128 aa).

It belongs to the UPF0325 family.

This Shigella boydii serotype 18 (strain CDC 3083-94 / BS512) protein is UPF0325 protein YaeH.